The chain runs to 395 residues: Elongation factor Tu (395 aa).

Residues 10-204 (KPHVNIGTIG…AVDEYIPTPQ (195 aa)) form the tr-type G domain. A G1 region spans residues 19-26 (GHVDHGKT). Residue 19–26 (GHVDHGKT) participates in GTP binding. Thr-26 serves as a coordination point for Mg(2+). The segment at 60–64 (GITIS) is G2. The G3 stretch occupies residues 81-84 (DCPG). GTP is bound by residues 81 to 85 (DCPGH) and 136 to 139 (NKCD). The tract at residues 136–139 (NKCD) is G4. Positions 174-176 (SAL) are G5.

It belongs to the TRAFAC class translation factor GTPase superfamily. Classic translation factor GTPase family. EF-Tu/EF-1A subfamily. As to quaternary structure, monomer.

It is found in the cytoplasm. The enzyme catalyses GTP + H2O = GDP + phosphate + H(+). GTP hydrolase that promotes the GTP-dependent binding of aminoacyl-tRNA to the A-site of ribosomes during protein biosynthesis. The polypeptide is Elongation factor Tu (Geobacillus kaustophilus (strain HTA426)).